The primary structure comprises 692 residues: Elongation factor G (692 aa).

The tr-type G domain maps to 8-282 (ENTRNIGIMA…AVIDYLPSPL (275 aa)). Residues 17-24 (AHIDAGKT), 81-85 (DTPGH), and 135-138 (NKMD) each bind GTP.

This sequence belongs to the TRAFAC class translation factor GTPase superfamily. Classic translation factor GTPase family. EF-G/EF-2 subfamily.

It is found in the cytoplasm. Functionally, catalyzes the GTP-dependent ribosomal translocation step during translation elongation. During this step, the ribosome changes from the pre-translocational (PRE) to the post-translocational (POST) state as the newly formed A-site-bound peptidyl-tRNA and P-site-bound deacylated tRNA move to the P and E sites, respectively. Catalyzes the coordinated movement of the two tRNA molecules, the mRNA and conformational changes in the ribosome. The chain is Elongation factor G from Bacillus cereus (strain AH820).